A 486-amino-acid polypeptide reads, in one-letter code: Small ribosomal subunit protein uS17B (486 aa).

The 30S ribosomal protein S17 stretch occupies residues 1–112; sequence MRDIGINGIK…IENKSNINFV (112 aa). Positions 113 to 486 are unknown; that stretch reads DNLLNVDDKW…ELWTRKNYKS (374 aa).

The protein belongs to the universal ribosomal protein uS17 family. In terms of assembly, part of the 30S ribosomal subunit.

One of the primary rRNA binding proteins, it binds specifically to the 5'-end of 16S ribosomal RNA. The protein is Small ribosomal subunit protein uS17B of Methanosarcina acetivorans (strain ATCC 35395 / DSM 2834 / JCM 12185 / C2A).